Reading from the N-terminus, the 169-residue chain is Sulfopyruvate decarboxylase subunit alpha (169 aa).

The protein belongs to the ComD family. Heterododecamer composed of 6 subunits alpha and 6 subunits beta.

The catalysed reaction is 3-sulfopyruvate + H(+) = sulfoacetaldehyde + CO2. It functions in the pathway cofactor biosynthesis; coenzyme M biosynthesis; sulfoacetaldehyde from phosphoenolpyruvate and sulfite: step 4/4. Inhibited by oxygen when heated in air at 80 degrees Celsius. The enzyme is reactivated by addition of dithionite. Involved in the biosynthesis of the coenzyme M (2-mercaptoethanesulfonic acid). Catalyzes the decarboxylation of sulfopyruvate to sulfoacetaldehyde. This is Sulfopyruvate decarboxylase subunit alpha from Methanocaldococcus jannaschii (strain ATCC 43067 / DSM 2661 / JAL-1 / JCM 10045 / NBRC 100440) (Methanococcus jannaschii).